The primary structure comprises 152 residues: Large ribosomal subunit protein uL30 (152 aa).

Belongs to the universal ribosomal protein uL30 family. As to quaternary structure, part of the 50S ribosomal subunit.

The sequence is that of Large ribosomal subunit protein uL30 from Methanosphaera stadtmanae (strain ATCC 43021 / DSM 3091 / JCM 11832 / MCB-3).